The chain runs to 106 residues: Acylphosphatase-2 (106 aa).

An Acylphosphatase-like domain is found at S16–Y106. Residues R31 and N49 contribute to the active site. S100 bears the Phosphoserine mark.

It belongs to the acylphosphatase family.

It catalyses the reaction an acyl phosphate + H2O = a carboxylate + phosphate + H(+). In Mus musculus (Mouse), this protein is Acylphosphatase-2 (Acyp2).